The chain runs to 97 residues: uncharacterized protein (97 aa).

Serine 2 carries the post-translational modification N-acetylserine.

This is an uncharacterized protein from Mycobacterium tuberculosis (strain ATCC 25618 / H37Rv).